The chain runs to 176 residues: HTH-type transcriptional regulator DctR (176 aa).

One can recognise an HTH luxR-type domain in the interval 109-174 (VPEANVSLSR…ELVRHQHIDY (66 aa)). The H-T-H motif DNA-binding region spans 133–152 (TEDILEKLKISLKTFYCHKH).

Functionally, may act as a transcriptional regulator of dctA. The chain is HTH-type transcriptional regulator DctR (dctR) from Shigella flexneri.